Reading from the N-terminus, the 449-residue chain is Tubulin beta chain (449 aa).

Q11, E69, S138, G142, T143, G144, N204, and N226 together coordinate GTP. E69 contacts Mg(2+). The segment at 426–449 (QDATAEEEGEFDEEEGEMGAEEGA) is disordered. A compositionally biased stretch (acidic residues) spans 429–449 (TAEEEGEFDEEEGEMGAEEGA).

This sequence belongs to the tubulin family. As to quaternary structure, dimer of alpha and beta chains. A typical microtubule is a hollow water-filled tube with an outer diameter of 25 nm and an inner diameter of 15 nM. Alpha-beta heterodimers associate head-to-tail to form protofilaments running lengthwise along the microtubule wall with the beta-tubulin subunit facing the microtubule plus end conferring a structural polarity. Microtubules usually have 13 protofilaments but different protofilament numbers can be found in some organisms and specialized cells. Requires Mg(2+) as cofactor.

The protein resides in the cytoplasm. It localises to the cytoskeleton. Its function is as follows. Tubulin is the major constituent of microtubules, a cylinder consisting of laterally associated linear protofilaments composed of alpha- and beta-tubulin heterodimers. Microtubules grow by the addition of GTP-tubulin dimers to the microtubule end, where a stabilizing cap forms. Below the cap, tubulin dimers are in GDP-bound state, owing to GTPase activity of alpha-tubulin. This chain is Tubulin beta chain, found in Toxoplasma gondii.